The following is a 133-amino-acid chain: Large ribosomal subunit protein uL15 (133 aa).

The interval 1 to 62 is disordered; it reads MALHNLQPAP…GQQPLQRRLP (62 aa). Residues 32-45 show a composition bias toward polar residues; it reads TRGQKGQKSRTGYS.

It belongs to the universal ribosomal protein uL15 family. Part of the 50S ribosomal subunit.

Binds to the 23S rRNA. The sequence is that of Large ribosomal subunit protein uL15 from Nitratiruptor sp. (strain SB155-2).